The chain runs to 161 residues: Phosphopantetheine adenylyltransferase (161 aa).

S9 serves as a coordination point for substrate. ATP-binding positions include 9 to 10 and H17; that span reads SF. Substrate-binding residues include K41, L73, and R87. ATP contacts are provided by residues 88 to 90, E98, and 123 to 129; these read GIR and TGFISST.

Belongs to the bacterial CoaD family. In terms of assembly, homohexamer. The cofactor is Mg(2+).

Its subcellular location is the cytoplasm. The enzyme catalyses (R)-4'-phosphopantetheine + ATP + H(+) = 3'-dephospho-CoA + diphosphate. The protein operates within cofactor biosynthesis; coenzyme A biosynthesis; CoA from (R)-pantothenate: step 4/5. Reversibly transfers an adenylyl group from ATP to 4'-phosphopantetheine, yielding dephospho-CoA (dPCoA) and pyrophosphate. This chain is Phosphopantetheine adenylyltransferase, found in Psychromonas ingrahamii (strain DSM 17664 / CCUG 51855 / 37).